Here is a 1386-residue protein sequence, read N- to C-terminus: Roundabout homolog 3 (1386 aa).

The signal sequence occupies residues 1 to 20; it reads MLRYLLKTLLQMNLFADSLA. Topologically, residues 21–891 are extracellular; sequence GDISNSSELL…VRLARVLREP (871 aa). Asparagine 25, asparagine 34, asparagine 41, and asparagine 53 each carry an N-linked (GlcNAc...) asparagine glycan. 5 consecutive Ig-like C2-type domains span residues 64–160, 166–253, 258–342, 347–440, and 450–531; these read PRIV…ASLE, DDFR…AEVM, PSFL…GSLS, PQLV…ALLE, and PPVI…GEAT. An intrachain disulfide couples cysteine 85 to cysteine 143. A glycan (N-linked (GlcNAc...) asparagine) is linked at asparagine 156. 3 cysteine pairs are disulfide-bonded: cysteine 187/cysteine 236, cysteine 279/cysteine 326, and cysteine 368/cysteine 424. 3 N-linked (GlcNAc...) asparagine glycosylation sites follow: asparagine 410, asparagine 459, and asparagine 503. A disulfide bridge links cysteine 472 with cysteine 521. Disordered stretches follow at residues 541–563 and 639–662; these read DWGV…SQPV and EPSP…EDPW. A compositionally biased stretch (pro residues) spans 546–559; it reads PDPPTEPSSPPGAP. Fibronectin type-III domains follow at residues 558-652, 671-766, and 771-869; these read APSQ…TQDS, VAVR…IPEE, and PPQG…SPPD. N-linked (GlcNAc...) asparagine glycans are attached at residues asparagine 784, asparagine 813, and asparagine 820. Residues 892–912 form a helical membrane-spanning segment; it reads AFLAGSGAACGALLLGLCAAL. Residues 913-1386 are Cytoplasmic-facing; the sequence is YWRRKQRKEL…PGQKRREEPR (474 aa). Disordered regions lie at residues 965-989, 1028-1310, and 1327-1386; these read SWPH…NPDP, ELQT…AVPL, and SRPS…EEPR. Over residues 1067–1083 the composition is skewed to low complexity; it reads VKLLGKPVQMPSLNWPE. A compositionally biased stretch (acidic residues) spans 1099–1112; sequence GPEEELEGSSEPEE. A compositionally biased stretch (pro residues) spans 1158–1169; sequence PSPPDPPQPPTD. Low complexity-rich tracts occupy residues 1178–1191 and 1202–1229; these read RRVP…LSVS and PAGL…SAPG. Serine 1263 carries the post-translational modification Phosphoserine. The segment covering 1294–1304 has biased composition (basic and acidic residues); sequence LERERSGERKA. The segment covering 1333–1344 has biased composition (polar residues); sequence SRGQGTSTCSTA. The span at 1345–1361 shows a compositional bias: low complexity; that stretch reads GSNSSRGSSSSRGSRGP.

The protein belongs to the immunoglobulin superfamily. ROBO family. Monomer. Interacts (via Fibronectin type-III 1 domain) with NELL2 (via the EGF domains) with a 3:3 stoichiometry; this interaction promotes oligomerization of ROBO3 resulting in the repulsion of commissural axons in the midline.

It is found in the membrane. In terms of biological role, receptor involved in axon guidance during development. Acts as a multifunctional regulator of pathfinding that simultaneously mediates NELL2 repulsion, inhibits SLIT repulsion, and facilitates Netrin-1/NTN1 attraction. In spinal cord development plays a role in guiding commissural axons probably by preventing premature sensitivity to Slit proteins thus inhibiting Slit signaling through ROBO1/ROBO2. Binding OF NELL2 to the receptor ROBO3 promotes oligomerization of ROBO3, resulting in the repulsion of commissural axons in the midline. ROBO3 also indirectly boosts axon attraction to NTN1 without interacting with NTN1 itself. The protein is Roundabout homolog 3 of Homo sapiens (Human).